Reading from the N-terminus, the 1392-residue chain is FERM and PDZ domain-containing protein 2 (1392 aa).

Residues 15-197 (VTLASALQVR…SEVERRVVEE (183 aa)) form the KIND domain. The tract at residues 211 to 246 (SRLHQADGESPGAPASDALQPRRVSERSAETQSSLE) is disordered. The FERM domain occupies 342–642 (CVVLLNGRCL…WFNAQTGSKH (301 aa)). The region spanning 775–861 (GLFGEPNQDI…MAVRMIQNSP (87 aa)) is the PDZ 1 domain. The disordered stretch occupies residues 903 to 930 (GRQSPHIHDQDRSVRGTEMAQGAGSCPP). The segment covering 908–917 (HIHDQDRSVR) has biased composition (basic and acidic residues). The interval 937–1027 (TGEIYFVELV…VARLVLERRG (91 aa)) is interaction with GRIN2A and GRIN2B. 2 PDZ domains span residues 950 to 1035 (GTLG…PQCP) and 1079 to 1167 (RGLG…PEME). Residues 1186–1236 (CAGSEQSPSLDQEDNWRDSTSLDAGEGLSPGPESSYKDVRQVKGDREKERP) are disordered. The segment covering 1220-1236 (SYKDVRQVKGDREKERP) has biased composition (basic and acidic residues).

Interacts (via the second PDZ domain) with CTNND2 (via the extreme C-terminus). Interacts (via the second PDZ domain) with PKP4 (via the extreme C-terminus); the interaction directs FRMPD2 to the basolateral membranes. Interacts (via the second PDZ domain) with ARVCF (via the extreme C-terminus). Interacts (via the second PDZ domain) with NMDAR subunits GRIN2A/GLUN2A and GRIN2B/GLUN2B (via the extreme C-terminus); the interaction is direct and is likely to promote NMDAR-mediated neural signal transmission. Binds GRIN2A with lower affinity than GRIN2B. Interacts (via the third PDZ domain) with LRIT1 (via the extreme C-terminus); the interaction leads to their colocalization in photoreceptor synapses. Interacts with NOD2; the interaction is likely to trigger NOD2-mediated nuclear factor kappaB activation.

It localises to the cytoplasm. It is found in the postsynaptic density. Its subcellular location is the basolateral cell membrane. The protein resides in the cell junction. The protein localises to the tight junction. Functions as a scaffold protein and likely plays a role in N-methyl-D-aspartic acid receptor (NMDAR)-mediated synaptic excitatory transmission. May be involved in synapse formation in cone photoreceptor cells. May play a role in the regulation of tight junction formation. Binds phosphatidylinositol 3,4-bisphosphate (PtdIns(3,4)P2). May pNF-kappa-Blay a role in the regulation of NOD2-mediated NF-kappa-B activation in immune response. This is FERM and PDZ domain-containing protein 2 from Mus musculus (Mouse).